The chain runs to 212 residues: Adenylate kinase (212 aa).

ATP is bound at residue 10–15 (GAGKGT). The segment at 30 to 59 (AIGDIFRTIIKTSTSEAELINNYVRQGELI) is NMP. AMP-binding positions include arginine 36, 57–59 (ELI), 85–88 (GYPR), and glutamine 92. The tract at residues 122-160 (GRYSCKNCGKIYNRYFLQPKTDNVCDVCGSSTFDYRKDD) is LID. Position 123 (arginine 123) interacts with ATP. Zn(2+) is bound by residues cysteine 126 and cysteine 129. Position 132–133 (132–133 (IY)) interacts with ATP. 2 residues coordinate Zn(2+): cysteine 146 and cysteine 149. Arginine 157 and arginine 168 together coordinate AMP. ATP is bound at residue lysine 196.

It belongs to the adenylate kinase family. Monomer.

The protein localises to the cytoplasm. The catalysed reaction is AMP + ATP = 2 ADP. It functions in the pathway purine metabolism; AMP biosynthesis via salvage pathway; AMP from ADP: step 1/1. Functionally, catalyzes the reversible transfer of the terminal phosphate group between ATP and AMP. Plays an important role in cellular energy homeostasis and in adenine nucleotide metabolism. This Rickettsia peacockii (strain Rustic) protein is Adenylate kinase.